The following is a 381-amino-acid chain: Dof zinc finger protein 2 (381 aa).

The segment at 19-81 is disordered; that stretch reads MLMGANPNPN…ARPQKEKALN (63 aa). 2 stretches are compositionally biased toward low complexity: residues 23–32 and 40–59; these read ANPNPNGSSN and SAASAQRPIAPPAAGAAAGA. Residues 68–79 show a composition bias toward basic and acidic residues; it reads TERRARPQKEKA. The Dof-type zinc finger occupies 80-134; that stretch reads LNCPRCNSTNTKFCYYNNYSLQQPRYFCKTCRRYWTEGGSLRNVPVGGGSRKNKR. The Zn(2+) site is built by cysteine 82, cysteine 85, cysteine 107, and cysteine 110. The segment at 329–349 is disordered; it reads AGDANSGGDHQYDHGKNQGGG.

It localises to the nucleus. Its function is as follows. Transcription factor that may transactivate seed storage protein genes in developing seeds. In Oryza sativa subsp. japonica (Rice), this protein is Dof zinc finger protein 2.